We begin with the raw amino-acid sequence, 142 residues long: Alpha-lactalbumin (142 aa).

A signal peptide spans 1–19 (MMSFVSLLLVGILFHATQA). The region spanning 20–142 (EQLTKCEVFQ…KLDQWLCEKL (123 aa)) is the C-type lysozyme domain. 4 disulfide bridges follow: cysteine 25-cysteine 139, cysteine 47-cysteine 130, cysteine 80-cysteine 96, and cysteine 92-cysteine 110. N-linked (GlcNAc...) asparagine glycosylation is found at asparagine 64 and asparagine 93. Lysine 98, aspartate 101, aspartate 103, aspartate 106, and aspartate 107 together coordinate Ca(2+).

It belongs to the glycosyl hydrolase 22 family. As to quaternary structure, lactose synthase (LS) is a heterodimer of a catalytic component, beta1,4-galactosyltransferase (beta4Gal-T1) and a regulatory component, alpha-lactalbumin (LA). As to expression, mammary gland specific. Secreted in milk.

The protein localises to the secreted. Functionally, regulatory subunit of lactose synthase, changes the substrate specificity of galactosyltransferase in the mammary gland making glucose a good acceptor substrate for this enzyme. This enables LS to synthesize lactose, the major carbohydrate component of milk. In other tissues, galactosyltransferase transfers galactose onto the N-acetylglucosamine of the oligosaccharide chains in glycoproteins. The chain is Alpha-lactalbumin (LALBA) from Capra hircus (Goat).